A 534-amino-acid polypeptide reads, in one-letter code: Neryl diphosphate diphosphatase, chloroplastic (534 aa).

4 residues coordinate Mg(2+): Asp-272, Asp-276, Asp-416, and Glu-424. A DDXXD motif motif is present at residues 272-276 (DDIFD).

It belongs to the terpene synthase family. Requires Mg(2+) as cofactor.

It is found in the plastid. It localises to the chloroplast. It catalyses the reaction neryl diphosphate + H2O = nerol + diphosphate. It participates in secondary metabolite biosynthesis; terpenoid biosynthesis. Its function is as follows. Monoterpene synthase that catalyzes the hydrolysis of neryl diphosphate (NPP) to form nerol and diphosphate. Is specific for NPP and has no hydrolase activity toward geranyl diphosphate (GPP) or farnesyl diphosphate (FPP). The monoterpene nerol may have an insect repellent effect for the plant leaves. The sequence is that of Neryl diphosphate diphosphatase, chloroplastic from Glycine max (Soybean).